The following is a 34-amino-acid chain: METNDLGFVASLMFILVPAIFLIVLYIGTQNNEA.

The helical transmembrane segment at 7–27 (GFVASLMFILVPAIFLIVLYI) threads the bilayer.

Belongs to the PsbM family. PSII is composed of 1 copy each of membrane proteins PsbA, PsbB, PsbC, PsbD, PsbE, PsbF, PsbH, PsbI, PsbJ, PsbK, PsbL, PsbM, PsbT, PsbX, PsbY, PsbZ, Psb30/Ycf12, peripheral proteins PsbO, CyanoQ (PsbQ), PsbU, PsbV and a large number of cofactors. It forms dimeric complexes.

It is found in the cellular thylakoid membrane. One of the components of the core complex of photosystem II (PSII). PSII is a light-driven water:plastoquinone oxidoreductase that uses light energy to abstract electrons from H(2)O, generating O(2) and a proton gradient subsequently used for ATP formation. It consists of a core antenna complex that captures photons, and an electron transfer chain that converts photonic excitation into a charge separation. This subunit is found at the monomer-monomer interface. This chain is Photosystem II reaction center protein M, found in Synechococcus sp. (strain CC9605).